The chain runs to 187 residues: RNA 2',3'-cyclic phosphodiesterase (187 aa).

Histidine 40 functions as the Proton donor in the catalytic mechanism. Short sequence motifs (HXTX) lie at residues 40–43 (HLTL) and 125–128 (HITI). The active-site Proton acceptor is the histidine 125.

Belongs to the 2H phosphoesterase superfamily. ThpR family.

It carries out the reaction a 3'-end 2',3'-cyclophospho-ribonucleotide-RNA + H2O = a 3'-end 2'-phospho-ribonucleotide-RNA + H(+). Its function is as follows. Hydrolyzes RNA 2',3'-cyclic phosphodiester to an RNA 2'-phosphomonoester. This is RNA 2',3'-cyclic phosphodiesterase from Thermotoga maritima (strain ATCC 43589 / DSM 3109 / JCM 10099 / NBRC 100826 / MSB8).